Reading from the N-terminus, the 179-residue chain is uncharacterized protein (179 aa).

The segment covering 1 to 14 (MTKKVKLDQDEINN) has biased composition (basic and acidic residues). Disordered stretches follow at residues 1 to 90 (MTKK…NNFC) and 121 to 147 (HKKS…DKKV). Composition is skewed to low complexity over residues 15–90 (KNKN…NNFC) and 126–137 (RSQSQSSLNSFD). Basic and acidic residues predominate over residues 138 to 147 (QDNKSKDKKV).

This is an uncharacterized protein from Dictyostelium discoideum (Social amoeba).